We begin with the raw amino-acid sequence, 169 residues long: MTVANRRIAVYPGTFDPITNGHIDLVSRAAPLFEKVVVGVAQSPSKGPALPLEQRVQLARGALGHHSNVEVIGFDTLLAHFVRSVQGGVLLRGLRAVSDFEYEFQMASMNRHLIPEVETLFLTPAEQHSFISSSLVREIARLGGDVSGFVPAAVLEALRKVREAKSAQS.

Substrate is bound at residue threonine 14. ATP is bound by residues 14–15 (TF) and histidine 22. The substrate site is built by lysine 46, leucine 78, and arginine 92. ATP is bound by residues 93 to 95 (GLR), glutamate 103, and 128 to 134 (HSFISSS).

Belongs to the bacterial CoaD family. In terms of assembly, homohexamer. Mg(2+) is required as a cofactor.

The protein localises to the cytoplasm. It carries out the reaction (R)-4'-phosphopantetheine + ATP + H(+) = 3'-dephospho-CoA + diphosphate. It participates in cofactor biosynthesis; coenzyme A biosynthesis; CoA from (R)-pantothenate: step 4/5. In terms of biological role, reversibly transfers an adenylyl group from ATP to 4'-phosphopantetheine, yielding dephospho-CoA (dPCoA) and pyrophosphate. This is Phosphopantetheine adenylyltransferase from Stenotrophomonas maltophilia (strain R551-3).